A 204-amino-acid polypeptide reads, in one-letter code: Inactive ribonuclease-like protein 9 (204 aa).

An N-terminal signal peptide occupies residues 1 to 26 (MMRTLITTHPLLLLLLLQQLLQPVQL). 3 disulfide bridges follow: cysteine 97–cysteine 152, cysteine 115–cysteine 167, and cysteine 122–cysteine 129. N-linked (GlcNAc...) asparagine glycans are attached at residues asparagine 130 and asparagine 142.

This sequence belongs to the pancreatic ribonuclease family.

It localises to the secreted. In terms of biological role, does not exhibit any ribonuclease activity. The protein is Inactive ribonuclease-like protein 9 (RNASE9) of Chlorocebus pygerythrus (Vervet monkey).